The chain runs to 86 residues: Small ribosomal subunit protein bS18 (86 aa).

Residues 1–20 (MSREEGNNGRRPGGKMRRSR) form a disordered region.

The protein belongs to the bacterial ribosomal protein bS18 family. Part of the 30S ribosomal subunit. Forms a tight heterodimer with protein bS6.

Binds as a heterodimer with protein bS6 to the central domain of the 16S rRNA, where it helps stabilize the platform of the 30S subunit. The polypeptide is Small ribosomal subunit protein bS18 (Clostridium beijerinckii (strain ATCC 51743 / NCIMB 8052) (Clostridium acetobutylicum)).